Reading from the N-terminus, the 245-residue chain is Probable 2-phosphosulfolactate phosphatase (245 aa).

The protein belongs to the ComB family. The cofactor is Mg(2+).

The catalysed reaction is (2R)-O-phospho-3-sulfolactate + H2O = (2R)-3-sulfolactate + phosphate. In Trichormus variabilis (strain ATCC 29413 / PCC 7937) (Anabaena variabilis), this protein is Probable 2-phosphosulfolactate phosphatase.